A 249-amino-acid polypeptide reads, in one-letter code: Inner membrane protein pE248R (249 aa).

A lipid anchor (N-myristoyl glycine; by host) is attached at glycine 2. The Cytoplasmic segment spans residues glycine 2–asparagine 199. The helical transmembrane segment at isoleucine 200–phenylalanine 220 threads the bilayer. At leucine 221–glutamine 249 the chain is on the extracellular side.

Belongs to the asfivirus E248R family. Interacts with A151R.

It is found in the host membrane. It localises to the virion membrane. Essential for viral fusion with host endosomal membrane and core release. This chain is Inner membrane protein pE248R, found in African swine fever virus (isolate Pig/Kenya/KEN-50/1950) (ASFV).